The primary structure comprises 69 residues: Brevinin-1CG5 (69 aa).

The signal sequence occupies residues 1–22 (MFTLKKSLLLLFFLGTINLSLC). Positions 23–43 (EQERNAEEERRDDDEMDVEVE) are cleaved as a propeptide — removed in mature form. Residues Cys63 and Cys69 are joined by a disulfide bond.

It belongs to the frog skin active peptide (FSAP) family. Brevinin subfamily. In terms of tissue distribution, expressed by the skin glands.

It is found in the secreted. Antimicrobial peptide active against a variety of Gram-positive and Gram-negative bacterial strains. Has antifungal activity against C.albicans ATCC 10231 and a slime mold isolate. Has hemolytic activity against human erythrocytes. This Amolops chunganensis (Chungan torrent frog) protein is Brevinin-1CG5.